The following is a 669-amino-acid chain: UvrABC system protein B (669 aa).

In terms of domain architecture, Helicase ATP-binding spans 26-183; sequence EGLEDGLAHQ…RRLADLQYTR (158 aa). 39-46 lines the ATP pocket; sequence GVTGSGKT. Positions 92–115 match the Beta-hairpin motif; sequence YYDYYQPEAYVPSSDTFIEKDASV. Positions 431–593 constitute a Helicase C-terminal domain; the sequence is QVDDLLSEIR…IVPKGLNKKI (163 aa). Positions 629-664 constitute a UVR domain; that stretch reads EKEIQRLETEMYQHAKDLEFEKAAQTRDKLQTLRAQ.

Belongs to the UvrB family. As to quaternary structure, forms a heterotetramer with UvrA during the search for lesions. Interacts with UvrC in an incision complex.

It is found in the cytoplasm. Its function is as follows. The UvrABC repair system catalyzes the recognition and processing of DNA lesions. A damage recognition complex composed of 2 UvrA and 2 UvrB subunits scans DNA for abnormalities. Upon binding of the UvrA(2)B(2) complex to a putative damaged site, the DNA wraps around one UvrB monomer. DNA wrap is dependent on ATP binding by UvrB and probably causes local melting of the DNA helix, facilitating insertion of UvrB beta-hairpin between the DNA strands. Then UvrB probes one DNA strand for the presence of a lesion. If a lesion is found the UvrA subunits dissociate and the UvrB-DNA preincision complex is formed. This complex is subsequently bound by UvrC and the second UvrB is released. If no lesion is found, the DNA wraps around the other UvrB subunit that will check the other stand for damage. This is UvrABC system protein B from Proteus mirabilis (strain HI4320).